Consider the following 255-residue polypeptide: Capsid protein (255 aa).

The Bipartite nuclear localization signal signature appears at Met-1–Ser-25.

The protein belongs to the geminiviridae capsid protein family. Homomultimer. Interacts with the movement protein. Binds to single-stranded and double-stranded viral DNA.

It is found in the virion. Its subcellular location is the host nucleus. Functionally, encapsidates the viral genome into characteristic twinned ('geminate') particles. Binds the genomic viral ssDNA and shuttles it into and out of the cell nucleus. Plays a role in protection of the genome from degradation, virus acquisition and transmission by insect vectors, infectivity, and systemic movement. The CP of monopartite geminiviruses is absolutely essential for virus movement. In Miscanthus streak virus (isolate 91) (MiSV), this protein is Capsid protein.